Here is a 543-residue protein sequence, read N- to C-terminus: Cyclohexanone 1,2-monooxygenase (543 aa).

FAD is bound by residues Phe16, Asp37, Trp46, Asp57, Tyr63, and Val110.

It belongs to the FAD-binding monooxygenase family. It depends on FAD as a cofactor.

It catalyses the reaction cyclohexanone + NADPH + O2 + H(+) = hexano-6-lactone + NADP(+) + H2O. The polypeptide is Cyclohexanone 1,2-monooxygenase (Acinetobacter sp).